A 108-amino-acid chain; its full sequence is UPF0060 membrane protein BH2744 (108 aa).

4 consecutive transmembrane segments (helical) span residues 6–26 (TLFL…WLWL), 31–51 (PVYL…IATF), 60–80 (VYAA…WWID), and 86–106 (TYDW…LWAP).

It belongs to the UPF0060 family.

Its subcellular location is the cell membrane. The chain is UPF0060 membrane protein BH2744 from Halalkalibacterium halodurans (strain ATCC BAA-125 / DSM 18197 / FERM 7344 / JCM 9153 / C-125) (Bacillus halodurans).